Reading from the N-terminus, the 255-residue chain is tRNA (guanine-N(1)-)-methyltransferase (255 aa).

S-adenosyl-L-methionine-binding positions include Gly-117 and 137–142; that span reads LGDFVL.

It belongs to the RNA methyltransferase TrmD family. In terms of assembly, homodimer.

The protein resides in the cytoplasm. The enzyme catalyses guanosine(37) in tRNA + S-adenosyl-L-methionine = N(1)-methylguanosine(37) in tRNA + S-adenosyl-L-homocysteine + H(+). Its function is as follows. Specifically methylates guanosine-37 in various tRNAs. This is tRNA (guanine-N(1)-)-methyltransferase from Paraburkholderia phytofirmans (strain DSM 17436 / LMG 22146 / PsJN) (Burkholderia phytofirmans).